Here is a 279-residue protein sequence, read N- to C-terminus: Plasmodesmata-located protein 8 (279 aa).

The first 20 residues, 1–20 (MRRLFLFSLLFLFFYSSSSS), serve as a signal peptide directing secretion. Topologically, residues 21-253 (RSSSESHIFI…PTNGDHVGKS (233 aa)) are extracellular. Gnk2-homologous domains follow at residues 27–135 (HIFI…TNDF) and 137–237 (GKPD…GSGY). Disulfide bonds link Cys34-Cys113, Cys89-Cys98, Cys101-Cys126, Cys148-Cys215, Cys191-Cys200, and Cys203-Cys228. Residues 254-274 (IAIIVGVIAGFAILVVLLSLC) form a helical membrane-spanning segment. Residues 254–274 (IAIIVGVIAGFAILVVLLSLC) form a necessary and sufficient for plasmodesmal targeting region. Over 275–279 (RNSMH) the chain is Cytoplasmic.

The protein belongs to the cysteine-rich repeat secretory protein family. Plasmodesmata-located proteins (PDLD) subfamily. As to quaternary structure, interacts with ACBP6; interaction occurs at the plasma membrane. In terms of assembly, (Microbial infection) Interacts with Grapevine fanleaf virus (GFLV) 2B-MP. Highly expressed in pollen, lateral root and elongation zone. Higher expression in the reproductive tissues (flowers and buds) than in vegetative organs (leaves and stems). High expression in shoot and root phloem companion cells (at protein level).

Its subcellular location is the cell membrane. The protein resides in the cell junction. It is found in the plasmodesma. Its function is as follows. Modulates cell-to-cell trafficking. In Arabidopsis thaliana (Mouse-ear cress), this protein is Plasmodesmata-located protein 8.